The chain runs to 119 residues: MSINKNIARLRRAKSTRSHIRELGVARLSVLRTGQHLYAQVFTADGSKVIAAANTLQADVKDGLKNGKNSDAAVKVGKLIAERAKAAGIEKVAFDRSGYRYHGRIKALADAAREGGLQF.

The protein belongs to the universal ribosomal protein uL18 family. In terms of assembly, part of the 50S ribosomal subunit; part of the 5S rRNA/L5/L18/L25 subcomplex. Contacts the 5S and 23S rRNAs.

Its function is as follows. This is one of the proteins that bind and probably mediate the attachment of the 5S RNA into the large ribosomal subunit, where it forms part of the central protuberance. The polypeptide is Large ribosomal subunit protein uL18 (Xanthomonas oryzae pv. oryzae (strain MAFF 311018)).